Consider the following 353-residue polypeptide: Photosystem II D2 protein (353 aa).

The residue at position 2 (Thr2) is an N-acetylthreonine. Position 2 is a phosphothreonine (Thr2). Residues 41–61 (CAYFALGGWFTGTTFVTSWYT) traverse the membrane as a helical segment. Chlorophyll a is bound at residue His118. Residues 125 to 141 (GFMLRQFELARSVQLRP) traverse the membrane as a helical segment. 2 residues coordinate pheophytin a: Gln130 and Asn143. Residues 153-166 (VFVSVFLIYPLGQS) traverse the membrane as a helical segment. His198 contacts chlorophyll a. A helical transmembrane segment spans residues 208 to 228 (AALLCAIHGATVENTLFEDGD). Residues His215 and Phe262 each contribute to the a plastoquinone site. His215 is a binding site for Fe cation. His269 provides a ligand contact to Fe cation. A helical membrane pass occupies residues 279 to 295 (GLWMSALGVVGLALNLR).

This sequence belongs to the reaction center PufL/M/PsbA/D family. PSII is composed of 1 copy each of membrane proteins PsbA, PsbB, PsbC, PsbD, PsbE, PsbF, PsbH, PsbI, PsbJ, PsbK, PsbL, PsbM, PsbT, PsbX, PsbY, PsbZ, Psb30/Ycf12, at least 3 peripheral proteins of the oxygen-evolving complex and a large number of cofactors. It forms dimeric complexes. The D1/D2 heterodimer binds P680, chlorophylls that are the primary electron donor of PSII, and subsequent electron acceptors. It shares a non-heme iron and each subunit binds pheophytin, quinone, additional chlorophylls, carotenoids and lipids. There is also a Cl(-1) ion associated with D1 and D2, which is required for oxygen evolution. The PSII complex binds additional chlorophylls, carotenoids and specific lipids. serves as cofactor.

It localises to the plastid. The protein localises to the chloroplast thylakoid membrane. The enzyme catalyses 2 a plastoquinone + 4 hnu + 2 H2O = 2 a plastoquinol + O2. Photosystem II (PSII) is a light-driven water:plastoquinone oxidoreductase that uses light energy to abstract electrons from H(2)O, generating O(2) and a proton gradient subsequently used for ATP formation. It consists of a core antenna complex that captures photons, and an electron transfer chain that converts photonic excitation into a charge separation. The D1/D2 (PsbA/PsbD) reaction center heterodimer binds P680, the primary electron donor of PSII as well as several subsequent electron acceptors. D2 is needed for assembly of a stable PSII complex. In Nuphar advena (Common spatterdock), this protein is Photosystem II D2 protein.